The chain runs to 540 residues: Chaperonin GroEL (540 aa).

ATP is bound by residues 29–32, 86–90, Gly413, 476–478, and Asp492; these read TIGP, DGTTT, and NAA. The interval 520-540 is disordered; that stretch reads DKPEPESNNQMPATPGMGGMM.

It belongs to the chaperonin (HSP60) family. In terms of assembly, forms a cylinder of 14 subunits composed of two heptameric rings stacked back-to-back. Interacts with the co-chaperonin GroES.

The protein localises to the cytoplasm. The catalysed reaction is ATP + H2O + a folded polypeptide = ADP + phosphate + an unfolded polypeptide.. In terms of biological role, together with its co-chaperonin GroES, plays an essential role in assisting protein folding. The GroEL-GroES system forms a nano-cage that allows encapsulation of the non-native substrate proteins and provides a physical environment optimized to promote and accelerate protein folding. The protein is Chaperonin GroEL of Ligilactobacillus salivarius (strain UCC118) (Lactobacillus salivarius).